Here is a 597-residue protein sequence, read N- to C-terminus: Elongation factor 4 (597 aa).

One can recognise a tr-type G domain in the interval 2-184 (DHIRNFSIIA…ALIAKVPPPK (183 aa)). GTP is bound by residues 14-19 (DHGKST) and 131-134 (NKID).

This sequence belongs to the TRAFAC class translation factor GTPase superfamily. Classic translation factor GTPase family. LepA subfamily.

The protein localises to the cell inner membrane. The catalysed reaction is GTP + H2O = GDP + phosphate + H(+). Required for accurate and efficient protein synthesis under certain stress conditions. May act as a fidelity factor of the translation reaction, by catalyzing a one-codon backward translocation of tRNAs on improperly translocated ribosomes. Back-translocation proceeds from a post-translocation (POST) complex to a pre-translocation (PRE) complex, thus giving elongation factor G a second chance to translocate the tRNAs correctly. Binds to ribosomes in a GTP-dependent manner. In Paraburkholderia phymatum (strain DSM 17167 / CIP 108236 / LMG 21445 / STM815) (Burkholderia phymatum), this protein is Elongation factor 4.